A 226-amino-acid chain; its full sequence is Large ribosomal subunit protein mL67 (226 aa).

Belongs to the mitochondrion-specific ribosomal protein mL67 family. As to quaternary structure, component of the mitochondrial large ribosomal subunit (mt-LSU). Mature yeast 74S mitochondrial ribosomes consist of a small (37S) and a large (54S) subunit. The 37S small subunit contains a 15S ribosomal RNA (15S mt-rRNA) and 34 different proteins. The 54S large subunit contains a 21S rRNA (21S mt-rRNA) and 46 different proteins.

It is found in the nucleus. The protein resides in the mitochondrion. Its function is as follows. Component of the mitochondrial ribosome (mitoribosome), a dedicated translation machinery responsible for the synthesis of mitochondrial genome-encoded proteins, including at least some of the essential transmembrane subunits of the mitochondrial respiratory chain. The mitoribosomes are attached to the mitochondrial inner membrane and translation products are cotranslationally integrated into the membrane. mL67/MHR1 also has extraribosomal functions, being involved in regulation of mitochondrial DNA recombination, maintenance and repair, and generation of homoplasmic cells. mL67/MHR1 also acts as transcription factor involved in regulation of RNA polymerase II-dependent transcription. The sequence is that of Large ribosomal subunit protein mL67 (MHR1) from Saccharomyces cerevisiae (strain ATCC 204508 / S288c) (Baker's yeast).